The sequence spans 400 residues: Probable splicing factor YJU2B (400 aa).

A disordered region spans residues 1 to 26 (MGERKGVNKYYPPDFNPEKHGSLNRY). A Phosphoserine modification is found at Ser40. A coiled-coil region spans residues 182-214 (LNSMLRKRFREKKKAMQEEEERDQALQAKASLA). A disordered region spans residues 255–400 (WFPSTPGASA…VADYSGSESE (146 aa)). Positions 283–292 (RRATPTSSPV) are enriched in polar residues. Position 310 is a phosphoserine (Ser310). Residues 327-341 (EGTNQNRPVSPQDCS) are compositionally biased toward polar residues. Over residues 364–380 (PQPPPDTSPEAPNPQDT) the composition is skewed to pro residues.

The protein belongs to the CWC16 family.

The protein resides in the nucleus. Its function is as follows. May be involved in mRNA splicing. In Bos taurus (Bovine), this protein is Probable splicing factor YJU2B (YJU2B).